The primary structure comprises 142 residues: Large ribosomal subunit protein uL11 (142 aa).

This sequence belongs to the universal ribosomal protein uL11 family. As to quaternary structure, part of the ribosomal stalk of the 50S ribosomal subunit. Interacts with L10 and the large rRNA to form the base of the stalk. L10 forms an elongated spine to which L12 dimers bind in a sequential fashion forming a multimeric L10(L12)X complex. In terms of processing, one or more lysine residues are methylated.

Functionally, forms part of the ribosomal stalk which helps the ribosome interact with GTP-bound translation factors. The polypeptide is Large ribosomal subunit protein uL11 (Mycobacterium tuberculosis (strain ATCC 25177 / H37Ra)).